The primary structure comprises 485 residues: N-succinylglutamate 5-semialdehyde dehydrogenase 2 (485 aa).

Residue 221–226 (GSAAAG) participates in NAD(+) binding. Residues glutamate 244 and cysteine 279 contribute to the active site.

Belongs to the aldehyde dehydrogenase family. AstD subfamily.

The enzyme catalyses N-succinyl-L-glutamate 5-semialdehyde + NAD(+) + H2O = N-succinyl-L-glutamate + NADH + 2 H(+). The protein operates within amino-acid degradation; L-arginine degradation via AST pathway; L-glutamate and succinate from L-arginine: step 4/5. Catalyzes the NAD-dependent reduction of succinylglutamate semialdehyde into succinylglutamate. In Caulobacter vibrioides (strain ATCC 19089 / CIP 103742 / CB 15) (Caulobacter crescentus), this protein is N-succinylglutamate 5-semialdehyde dehydrogenase 2.